A 440-amino-acid chain; its full sequence is UDP-N-acetylglucosamine 1-carboxyvinyltransferase (440 aa).

Lys-22–Asn-23 is a phosphoenolpyruvate binding site. A UDP-N-acetyl-alpha-D-glucosamine-binding site is contributed by Arg-102. Cys-126 acts as the Proton donor in catalysis. Cys-126 bears the 2-(S-cysteinyl)pyruvic acid O-phosphothioketal mark. UDP-N-acetyl-alpha-D-glucosamine contacts are provided by residues Arg-131 to Gln-135, Asp-320, and Ile-342.

It belongs to the EPSP synthase family. MurA subfamily.

Its subcellular location is the cytoplasm. The catalysed reaction is phosphoenolpyruvate + UDP-N-acetyl-alpha-D-glucosamine = UDP-N-acetyl-3-O-(1-carboxyvinyl)-alpha-D-glucosamine + phosphate. It participates in cell wall biogenesis; peptidoglycan biosynthesis. Its function is as follows. Cell wall formation. Adds enolpyruvyl to UDP-N-acetylglucosamine. This chain is UDP-N-acetylglucosamine 1-carboxyvinyltransferase, found in Acidovorax ebreus (strain TPSY) (Diaphorobacter sp. (strain TPSY)).